Here is a 149-residue protein sequence, read N- to C-terminus: Arginine regulator (149 aa).

The protein belongs to the ArgR family.

It localises to the cytoplasm. It functions in the pathway amino-acid degradation; L-arginine degradation via ADI pathway. Functionally, regulates the transcription of the arc operon, involved in arginine catabolism. The sequence is that of Arginine regulator (argR1) from Bacillus cereus (strain ATCC 10987 / NRS 248).